A 393-amino-acid chain; its full sequence is Na(+)/H(+) antiporter NhaA (393 aa).

The next 11 helical transmembrane spans lie at 14 to 34 (AAGM…NWSV), 60 to 80 (LLLW…GLEV), 96 to 116 (MLPL…FLLF), 125 to 145 (AGWA…LTLL), 155 to 175 (VFLL…IALF), 179 to 199 (QVFW…AYMN), 218 to 238 (VCIL…GFFI), 263 to 283 (FLIV…GIVL), 292 to 312 (LGIA…FSWL), 330 to 350 (IVAV…ITLL), and 362 to 382 (YAKL…YLAL).

It belongs to the NhaA Na(+)/H(+) (TC 2.A.33) antiporter family.

The protein localises to the cell inner membrane. It carries out the reaction Na(+)(in) + 2 H(+)(out) = Na(+)(out) + 2 H(+)(in). Na(+)/H(+) antiporter that extrudes sodium in exchange for external protons. The polypeptide is Na(+)/H(+) antiporter NhaA (Pectobacterium atrosepticum (strain SCRI 1043 / ATCC BAA-672) (Erwinia carotovora subsp. atroseptica)).